Consider the following 188-residue polypeptide: Archaetidylinositol phosphate synthase (188 aa).

2 helical membrane passes run 20–40 (LASL…ITLL) and 51–71 (ILAG…GALA). Residues D64, D67, D85, and D89 each contribute to the Mg(2+) site. D89 functions as the Proton acceptor in the catalytic mechanism. 2 helical membrane passes run 96-116 (ILFG…LTLI) and 147-167 (IIII…YLVA).

Belongs to the CDP-alcohol phosphatidyltransferase class-I family. Mn(2+) serves as cofactor. Requires Mg(2+) as cofactor.

Its subcellular location is the cell membrane. The enzyme catalyses CDP-2,3-bis-O-(phytanyl)-sn-glycerol + 1D-myo-inositol 3-phosphate = saturated 1-archaetidyl-1D-myo-inositol 3-phosphate + CMP + H(+). Its pathway is lipid metabolism; phospholipid metabolism. In terms of biological role, catalyzes the formation of archaetidylinositol phosphate (AIP) from CDP-archaeol (CDP-ArOH or CDP-2,3-bis-(O-phytanyl)-sn-glycerol) and 1L-myo-inositol 1-phosphate (IP or 1D-myo-inositol 3-phosphate). AIP is a precursor of archaetidyl-myo-inositol (AI), an ether-type inositol phospholipid ubiquitously distributed in archaea membranes and essential for glycolipid biosynthesis in archaea. The protein is Archaetidylinositol phosphate synthase of Pyrococcus horikoshii (strain ATCC 700860 / DSM 12428 / JCM 9974 / NBRC 100139 / OT-3).